Here is a 217-residue protein sequence, read N- to C-terminus: tRNA (guanine-N(7)-)-methyltransferase (217 aa).

S-adenosyl-L-methionine contacts are provided by E46, E71, D98, and D120. D120 is an active-site residue. K124 serves as a coordination point for substrate. The segment at 126–131 is interaction with RNA; sequence RHEKRR. Substrate contacts are provided by residues D156 and 196–199; that span reads TEYE.

It belongs to the class I-like SAM-binding methyltransferase superfamily. TrmB family.

The enzyme catalyses guanosine(46) in tRNA + S-adenosyl-L-methionine = N(7)-methylguanosine(46) in tRNA + S-adenosyl-L-homocysteine. The protein operates within tRNA modification; N(7)-methylguanine-tRNA biosynthesis. Catalyzes the formation of N(7)-methylguanine at position 46 (m7G46) in tRNA. This Lactobacillus gasseri (strain ATCC 33323 / DSM 20243 / BCRC 14619 / CIP 102991 / JCM 1131 / KCTC 3163 / NCIMB 11718 / NCTC 13722 / AM63) protein is tRNA (guanine-N(7)-)-methyltransferase.